A 251-amino-acid chain; its full sequence is Isopentenyl-diphosphate delta-isomerase (251 aa).

Residue lysine 49 participates in substrate binding. Positions 53 and 66 each coordinate Mg(2+). Residues 64-212 (LLHRAFSVFL…SNSFTPWFKL (149 aa)) form the Nudix hydrolase domain. Substrate-binding residues include arginine 86 and lysine 90. Cysteine 102 is a catalytic residue. Serine 103 is a substrate binding site. The Mg(2+) site is built by glutamate 162 and glutamate 164. Glutamate 164 is a catalytic residue.

It belongs to the IPP isomerase type 1 family. It depends on Mg(2+) as a cofactor.

The protein resides in the cytoplasm. The enzyme catalyses isopentenyl diphosphate = dimethylallyl diphosphate. The protein operates within isoprenoid biosynthesis; dimethylallyl diphosphate biosynthesis; dimethylallyl diphosphate from isopentenyl diphosphate: step 1/1. Functionally, isopentenyl-diphosphate delta-isomerase; part of the second module of ergosterol biosynthesis pathway that includes the middle steps of the pathway. The second module is carried out in the vacuole and involves the formation of farnesyl diphosphate, which is also an important intermediate in the biosynthesis of ubiquinone, dolichol, heme and prenylated proteins. Activity by the mevalonate kinase first converts mevalonate into 5-phosphomevalonate. 5-phosphomevalonate is then further converted to 5-diphosphomevalonate by the phosphomevalonate kinase. The diphosphomevalonate decarboxylase then produces isopentenyl diphosphate. The isopentenyl-diphosphate delta-isomerase then catalyzes the 1,3-allylic rearrangement of the homoallylic substrate isopentenyl (IPP) to its highly electrophilic allylic isomer, dimethylallyl diphosphate (DMAPP). Finally the farnesyl diphosphate synthase catalyzes the sequential condensation of isopentenyl pyrophosphate with dimethylallyl pyrophosphate, and then with the resultant geranylpyrophosphate to the ultimate product farnesyl pyrophosphate. This is Isopentenyl-diphosphate delta-isomerase from Phaffia rhodozyma (Yeast).